The primary structure comprises 673 residues: Methionine--tRNA ligase (673 aa).

The short motif at 14-24 is the 'HIGH' region element; it reads YYPSGKLHIGN. Positions 310-314 match the 'KMSKS' region motif; sequence KMSKS. Residue Lys313 coordinates ATP. Residues 571–673 enclose the tRNA-binding domain; sequence VFDKVELKVA…SEAPNGSSIS (103 aa).

It belongs to the class-I aminoacyl-tRNA synthetase family. MetG type 2B subfamily. Homodimer.

It is found in the cytoplasm. It catalyses the reaction tRNA(Met) + L-methionine + ATP = L-methionyl-tRNA(Met) + AMP + diphosphate. Functionally, is required not only for elongation of protein synthesis but also for the initiation of all mRNA translation through initiator tRNA(fMet) aminoacylation. The polypeptide is Methionine--tRNA ligase (metG) (Oceanobacillus iheyensis (strain DSM 14371 / CIP 107618 / JCM 11309 / KCTC 3954 / HTE831)).